Here is an 807-residue protein sequence, read N- to C-terminus: Spondin-1 (807 aa).

The signal sequence occupies residues 1–28 (MRLSPVLLRLSRGPALLALALPLAVALA). The region spanning 29-194 (FSDETLDKVP…DSTFDGVTDK (166 aa)) is the Reelin domain. 17 disulfide bridges follow: C44–C128, C156–C182, C199–C336, C200–C340, C202–C415, C443–C480, C454–C489, C459–C494, C502–C538, C513–C517, C548–C554, C559–C595, C570–C574, C605–C610, C615–C650, C626–C630, and C660–C665. The region spanning 195-388 (PILDCCACGT…LTSLDHPQSP (194 aa)) is the Spondin domain. The N-linked (GlcNAc...) asparagine glycan is linked to N214. The Ca(2+) site is built by D325, D354, and D358. TSP type-1 domains are found at residues 442-495 (TCIY…PGCS), 501-555 (TCTM…EECS), 558-611 (SCLT…PECH), 614-666 (PCLL…PECP), 668-721 (DCEL…RKCL), and 754-806 (GCRM…NVHP). The N-linked (GlcNAc...) asparagine glycan is linked to N681.

In terms of assembly, binds to the central extracellular domain of APP and inhibits beta-secretase cleavage of APP.

It localises to the secreted. Its subcellular location is the extracellular space. The protein resides in the extracellular matrix. In terms of biological role, cell adhesion protein that promotes the attachment of spinal cord and sensory neuron cells and the outgrowth of neurites in vitro. May contribute to the growth and guidance of axons in both the spinal cord and the PNS. Major factor for vascular smooth muscle cell. In Bos taurus (Bovine), this protein is Spondin-1 (SPON1).